The chain runs to 4538 residues: Polyketide synthase PksL (4538 aa).

An N-terminal hotdog fold 1 region spans residues 1–123 (MRWRSNVKKI…ADMHADSPAI (123 aa)). One can recognise a PKS/mFAS DH 1 domain in the interval 1–285 (MRWRSNVKKI…SKLVREAELI (285 aa)). His-26 acts as the Proton acceptor; for dehydratase activity 1 in catalysis. Residues 138–285 (QNVVQLDDVY…SKLVREAELI (148 aa)) form a C-terminal hotdog fold 1 region. Catalysis depends on Asp-199, which acts as the Proton donor; for dehydratase activity 1. The interval 289–314 (HQDAQETQMTRADTAERDKPADMVSS) is disordered. Positions 320–394 (SEAEQFVSQL…ELSAFLAEEY (75 aa)) constitute a Carrier 1 domain. Position 354 is an O-(pantetheine 4'-phosphoryl)serine (Ser-354). Residues 433–871 (AGDIAIIGLA…GSNAHIILEE (439 aa)) enclose the Ketosynthase family 3 (KS3) 1 domain. Active-site for beta-ketoacyl synthase 1 activity residues include Cys-609, His-744, and His-784. A dehydratase region spans residues 1048 to 1226 (HILHPLLHQN…DSLYAGENGV (179 aa)). Positions 1051-1175 (HPLLHQNVSD…GSAVLCEAGE (125 aa)) are N-terminal hotdog fold 2. Positions 1051–1340 (HPLLHQNVSD…ARVLETDQEG (290 aa)) constitute a PKS/mFAS DH 2 domain. Catalysis depends on His-1080, which acts as the Proton acceptor; for dehydratase activity 2. Residues 1189–1340 (NGRTLSPFDC…ARVLETDQEG (152 aa)) are C-terminal hotdog fold 2. The active-site Proton donor; for dehydratase activity 2 is Asp-1251. Residues 1520–1713 (KGVYLITGGA…WKDGGMQIDA (194 aa)) form a beta-ketoacyl reductase 1 region. In terms of domain architecture, Carrier 2 spans 1800 to 1873 (EKAENYFKQV…SLTRYFIDSR (74 aa)). Position 1834 is an O-(pantetheine 4'-phosphoryl)serine (Ser-1834). A Ketosynthase family 3 (KS3) 2 domain is found at 1926 to 2365 (TEEIAIIGIS…GVNAHILIEE (440 aa)). Residues Cys-2103, His-2238, and His-2278 each act as for beta-ketoacyl synthase 2 activity in the active site. The segment at 2546–2568 (TEEPFAPVQPVIPKPSVDREASG) is disordered. Carrier domains are found at residues 2597-2674 (ITAE…AHEL) and 2738-2815 (VAIE…KSEL). O-(pantetheine 4'-phosphoryl)serine occurs at positions 2634 and 2775. Residues 2828-2854 (SFEAAQQKPAASSHPKPAERPLQPVQH) are disordered. Residues 2873–3294 (EDAIAIVGMS…GTNAHIVIEE (422 aa)) form the Ketosynthase family 3 (KS3) 3 domain. Residues Cys-3040, His-3175, and His-3215 each act as for beta-ketoacyl synthase 3 activity in the active site. The segment at 3686–3887 (DKVLLITGGT…PNWKETGLGE (202 aa)) is beta-ketoacyl reductase 2. A Carrier 5 domain is found at 3960-4037 (NLFPETVDWL…SFAHWLISKY (78 aa)). An O-(pantetheine 4'-phosphoryl)serine modification is found at Ser-3997. In terms of domain architecture, Ketosynthase family 3 (KS3) 4 spans 4082 to 4485 (AEDIAIIGLS…GTNAHLIIEG (404 aa)). Cys-4237 functions as the For beta-ketoacyl synthase 4 activity in the catalytic mechanism.

Pantetheine 4'-phosphate serves as cofactor.

Its subcellular location is the cytoplasm. It participates in antibiotic biosynthesis; bacillaene biosynthesis. Its function is as follows. Involved in some intermediate steps for the synthesis of the antibiotic polyketide bacillaene which is involved in secondary metabolism. The chain is Polyketide synthase PksL (pksL) from Bacillus subtilis (strain 168).